Here is a 59-residue protein sequence, read N- to C-terminus: Large ribosomal subunit protein eL29 (59 aa).

Over residues 1-26 (MAKSKNHTAHNQTRKAHRNGIKKPKT) the composition is skewed to basic residues. Residues 1–37 (MAKSKNHTAHNQTRKAHRNGIKKPKTYKYPSLKGVDP) are disordered. Lys52 is covalently cross-linked (Glycyl lysine isopeptide (Lys-Gly) (interchain with G-Cter in ubiquitin)).

It belongs to the eukaryotic ribosomal protein eL29 family. As to quaternary structure, component of the large ribosomal subunit (LSU). Mature yeast ribosomes consist of a small (40S) and a large (60S) subunit. The 40S small subunit contains 1 molecule of ribosomal RNA (18S rRNA) and 33 different proteins (encoded by 57 genes). The large 60S subunit contains 3 rRNA molecules (25S, 5.8S and 5S rRNA) and 46 different proteins (encoded by 81 genes).

The protein localises to the cytoplasm. Functionally, component of the ribosome, a large ribonucleoprotein complex responsible for the synthesis of proteins in the cell. The small ribosomal subunit (SSU) binds messenger RNAs (mRNAs) and translates the encoded message by selecting cognate aminoacyl-transfer RNA (tRNA) molecules. The large subunit (LSU) contains the ribosomal catalytic site termed the peptidyl transferase center (PTC), which catalyzes the formation of peptide bonds, thereby polymerizing the amino acids delivered by tRNAs into a polypeptide chain. The nascent polypeptides leave the ribosome through a tunnel in the LSU and interact with protein factors that function in enzymatic processing, targeting, and the membrane insertion of nascent chains at the exit of the ribosomal tunnel. This chain is Large ribosomal subunit protein eL29, found in Saccharomyces cerevisiae (strain ATCC 204508 / S288c) (Baker's yeast).